Reading from the N-terminus, the 355-residue chain is MLEKEKKCIGIIFGGESNEHDVSVSSAKTVFKALISKTNINRFWVKAFYINKHGVWLDNDQSLVLLKEKRKNETIDKNQVFPKREINFLNTIEFQGIDIWFPLLHGVNGEDGAIHGLLKFTQKPIVGGGILGSALGMDKILMKKIFSHLEIPQVNYLDIQNQDLSDDKVKNNLSVEIIEKLKLPVFVKPANSGSSLGISKAKTRSEIIKALQKAWEIDSRIVIEEGLDVRELECGIIGNLKLTASEIGEVSYSTDWYDYDSKYSMDNQIIIPADIDSQISEQIKDIAIRSCRALNIYGFARVDFFLEKISNKIFLNEINTIPGFTSKSMFPMLWNASGLNIDQLVAKLVDISSDL.

Residues 143–350 (KKIFSHLEIP…IDQLVAKLVD (208 aa)) form the ATP-grasp domain. ATP is bound at residue 178–233 (IEKLKLPVFVKPANSGSSLGISKAKTRSEIIKALQKAWEIDSRIVIEEGLDVRELE). Mg(2+)-binding residues include Asp303, Glu317, and Asn319.

It belongs to the D-alanine--D-alanine ligase family. It depends on Mg(2+) as a cofactor. Requires Mn(2+) as cofactor.

The protein localises to the cytoplasm. The enzyme catalyses 2 D-alanine + ATP = D-alanyl-D-alanine + ADP + phosphate + H(+). It functions in the pathway cell wall biogenesis; peptidoglycan biosynthesis. Its function is as follows. Cell wall formation. In Prochlorococcus marinus subsp. pastoris (strain CCMP1986 / NIES-2087 / MED4), this protein is D-alanine--D-alanine ligase.